A 225-amino-acid chain; its full sequence is Protein-L-isoaspartate O-methyltransferase (225 aa).

The active site involves Ser-75.

It belongs to the methyltransferase superfamily. L-isoaspartyl/D-aspartyl protein methyltransferase family.

It is found in the cytoplasm. It carries out the reaction [protein]-L-isoaspartate + S-adenosyl-L-methionine = [protein]-L-isoaspartate alpha-methyl ester + S-adenosyl-L-homocysteine. In terms of biological role, catalyzes the methyl esterification of L-isoaspartyl residues in peptides and proteins that result from spontaneous decomposition of normal L-aspartyl and L-asparaginyl residues. It plays a role in the repair and/or degradation of damaged proteins. The chain is Protein-L-isoaspartate O-methyltransferase from Xanthomonas oryzae pv. oryzae (strain PXO99A).